The chain runs to 94 residues: Large ribosomal subunit protein bL25 (94 aa).

It belongs to the bacterial ribosomal protein bL25 family. In terms of assembly, part of the 50S ribosomal subunit; part of the 5S rRNA/L5/L18/L25 subcomplex. Contacts the 5S rRNA. Binds to the 5S rRNA independently of L5 and L18.

In terms of biological role, this is one of the proteins that binds to the 5S RNA in the ribosome where it forms part of the central protuberance. The chain is Large ribosomal subunit protein bL25 from Klebsiella pneumoniae (strain 342).